Reading from the N-terminus, the 490-residue chain is MERKNVESLFAHAGAINALVIGDLMLDQYLWGKAERISPEAPVQVVDVTREEIRIGGAGNVANNLVALGCRVSVASVVGGDENGTILLHAFSGKGIDVTGIVEDPSRTTSRKTRVLASNQQIVRIDRESRDEIGPDNERRIVDYLNAHGDRFNVILVSDYLKGVLTPTLLAEVIAFARKREIPVVVDPKGSDYAKYRGATVLTPNRKEAEAASGIAIRDDESLCRAGERLLETADLTALVITRSEEGMSLFLRGGQVVHIPTYAREVFDVTGAGDTVLAVLGMALAGGVGFADGARLANVAAGVAVGKVGTSTVSPAEIVGSLGFQHGEGDAKVKNLDVLAGIIAAEKAQGKRVVFTNGCFDLLHVGHVKYLQKARSFGDLLVLGLNSDASIRRLKGEKRPLIGQEERAHILAALDCIDYVVVFDEDTPLNLIETLRPAVLVKGGDYTLDGVVGREVVESYGGRVELVAFVDGRSTTNIIEKILKAYGEE.

The segment at 1 to 330 (MERKNVESLF…GSLGFQHGEG (330 aa)) is ribokinase. 205-208 (NRKE) contacts ATP. The active site involves Asp275. The interval 356–490 (FTNGCFDLLH…EKILKAYGEE (135 aa)) is cytidylyltransferase.

It in the N-terminal section; belongs to the carbohydrate kinase PfkB family. The protein in the C-terminal section; belongs to the cytidylyltransferase family. Homodimer.

It carries out the reaction D-glycero-beta-D-manno-heptose 7-phosphate + ATP = D-glycero-beta-D-manno-heptose 1,7-bisphosphate + ADP + H(+). The enzyme catalyses D-glycero-beta-D-manno-heptose 1-phosphate + ATP + H(+) = ADP-D-glycero-beta-D-manno-heptose + diphosphate. Its pathway is nucleotide-sugar biosynthesis; ADP-L-glycero-beta-D-manno-heptose biosynthesis; ADP-L-glycero-beta-D-manno-heptose from D-glycero-beta-D-manno-heptose 7-phosphate: step 1/4. The protein operates within nucleotide-sugar biosynthesis; ADP-L-glycero-beta-D-manno-heptose biosynthesis; ADP-L-glycero-beta-D-manno-heptose from D-glycero-beta-D-manno-heptose 7-phosphate: step 3/4. Functionally, catalyzes the phosphorylation of D-glycero-D-manno-heptose 7-phosphate at the C-1 position to selectively form D-glycero-beta-D-manno-heptose-1,7-bisphosphate. In terms of biological role, catalyzes the ADP transfer from ATP to D-glycero-beta-D-manno-heptose 1-phosphate, yielding ADP-D-glycero-beta-D-manno-heptose. The chain is Bifunctional protein HldE from Geobacter sulfurreducens (strain ATCC 51573 / DSM 12127 / PCA).